A 688-amino-acid chain; its full sequence is Potassium-transporting ATPase ATP-binding subunit (688 aa).

Helical transmembrane passes span 34–54, 62–82, 219–239, and 260–280; these read PVMFVVYLGSWLTTLIWLDIL, AMFTGSIALWLWFTVLFANMA, VALTILLVALTIVFLLATATL, and VLVALLVCLIPTTIGGLLSAI. The 4-aspartylphosphate intermediate role is filled by Asp-313. ATP-binding positions include Asp-350, Glu-354, 383 to 390, and Lys-401; that span reads FSAQTRMS. Asp-524 and Asp-528 together coordinate Mg(2+). The next 3 helical transmembrane spans lie at 594 to 614, 622 to 642, and 662 to 682; these read FAIIPAAFAATYPQLNALNIM, AILSAVIFNALVIVFLIPLAL, and IYGLGGLLVPFVGIKLIDLLL.

This sequence belongs to the cation transport ATPase (P-type) (TC 3.A.3) family. Type IA subfamily. The system is composed of three essential subunits: KdpA, KdpB and KdpC.

Its subcellular location is the cell inner membrane. The catalysed reaction is K(+)(out) + ATP + H2O = K(+)(in) + ADP + phosphate + H(+). In terms of biological role, part of the high-affinity ATP-driven potassium transport (or Kdp) system, which catalyzes the hydrolysis of ATP coupled with the electrogenic transport of potassium into the cytoplasm. This subunit is responsible for energy coupling to the transport system and for the release of the potassium ions to the cytoplasm. This Yersinia pestis bv. Antiqua (strain Antiqua) protein is Potassium-transporting ATPase ATP-binding subunit.